The following is a 213-amino-acid chain: Large ribosomal subunit protein uL3 (213 aa).

At Q151 the chain carries N5-methylglutamine.

It belongs to the universal ribosomal protein uL3 family. In terms of assembly, part of the 50S ribosomal subunit. Forms a cluster with proteins L14 and L19. In terms of processing, methylated by PrmB.

Its function is as follows. One of the primary rRNA binding proteins, it binds directly near the 3'-end of the 23S rRNA, where it nucleates assembly of the 50S subunit. This Rhizobium etli (strain ATCC 51251 / DSM 11541 / JCM 21823 / NBRC 15573 / CFN 42) protein is Large ribosomal subunit protein uL3.